The sequence spans 213 residues: Adenylate kinase (213 aa).

Position 10–15 (10–15 (GAGKGT)) interacts with ATP. The interval 30–59 (STGDIFRANIKNNTELGQKAKTYMDKGELV) is NMP. Residues threonine 31, arginine 36, 57–59 (ELV), 85–88 (GFPR), and glutamine 92 contribute to the AMP site. Residues 126-163 (GRRACVGCGATYHIQFNPTKVEGICDACGEKLILRDDD) are LID. Residue arginine 127 coordinates ATP. Residues cysteine 130 and cysteine 133 each coordinate Zn(2+). 136 to 137 (TY) provides a ligand contact to ATP. The Zn(2+) site is built by cysteine 150 and cysteine 153. Arginine 160 and arginine 171 together coordinate AMP. Glutamine 199 provides a ligand contact to ATP.

This sequence belongs to the adenylate kinase family. In terms of assembly, monomer.

The protein resides in the cytoplasm. It catalyses the reaction AMP + ATP = 2 ADP. It participates in purine metabolism; AMP biosynthesis via salvage pathway; AMP from ADP: step 1/1. Catalyzes the reversible transfer of the terminal phosphate group between ATP and AMP. Plays an important role in cellular energy homeostasis and in adenine nucleotide metabolism. The chain is Adenylate kinase from Lachnospira eligens (strain ATCC 27750 / DSM 3376 / VPI C15-48 / C15-B4) (Eubacterium eligens).